A 159-amino-acid chain; its full sequence is NAD(P)H-quinone oxidoreductase subunit J, chloroplastic (159 aa).

The protein belongs to the complex I 30 kDa subunit family. NDH is composed of at least 16 different subunits, 5 of which are encoded in the nucleus.

It is found in the plastid. It localises to the chloroplast thylakoid membrane. The catalysed reaction is a plastoquinone + NADH + (n+1) H(+)(in) = a plastoquinol + NAD(+) + n H(+)(out). It catalyses the reaction a plastoquinone + NADPH + (n+1) H(+)(in) = a plastoquinol + NADP(+) + n H(+)(out). NDH shuttles electrons from NAD(P)H:plastoquinone, via FMN and iron-sulfur (Fe-S) centers, to quinones in the photosynthetic chain and possibly in a chloroplast respiratory chain. The immediate electron acceptor for the enzyme in this species is believed to be plastoquinone. Couples the redox reaction to proton translocation, and thus conserves the redox energy in a proton gradient. The polypeptide is NAD(P)H-quinone oxidoreductase subunit J, chloroplastic (Oryza nivara (Indian wild rice)).